Consider the following 542-residue polypeptide: DNA-binding protein modulo (542 aa).

Positions 1-166 (MAQKKAVTVK…RGIPKVKVGK (166 aa)) are disordered. 2 positions are modified to phosphoserine: Ser-42 and Ser-44. Positions 59–114 (SEEDESDVEEQNDEQPGDDSDFETEEAAGLIDDEAEEDEEYNSDDEEDDDDDELEP) are enriched in acidic residues. 3 positions are modified to phosphoserine: Ser-120, Ser-129, and Ser-142. The segment covering 123–135 (ADEVDESDDDEEA) has biased composition (acidic residues). The span at 136 to 158 (PVEKPVSKKSEKANSEKSEENRG) shows a compositional bias: basic and acidic residues. 4 consecutive RRM domains span residues 175–251 (QIVF…QPRN), 258–331 (RTVV…RISQ), 340–429 (LTLV…NLTS), and 420–489 (RAIL…PNSL). Ser-304 is subject to Phosphoserine. Ser-330 bears the Phosphoserine; by PKA mark. Phosphoserine is present on Ser-443. The disordered stretch occupies residues 505–542 (RAPRKFQKDTKPNFGKKPFNKRPAQENGGKSFVKRARF).

The N-terminus is blocked.

It is found in the nucleus. In terms of biological role, its capacity to bind DNA and protein(s), and its differential expression during development suggest a role in the regulation of gene expression during Drosophila development. It could, in interaction with other factors, be required for the translation of instructions provided by pattern forming genes and controls, via chromatin changes, the activity of genes critical for the process of morphogenesis of several embryonic territories. The chain is DNA-binding protein modulo (mod) from Drosophila melanogaster (Fruit fly).